The following is an 878-amino-acid chain: Phosphoenolpyruvate carboxylase (878 aa).

Residues His138 and Lys545 contribute to the active site.

The protein belongs to the PEPCase type 1 family. Requires Mg(2+) as cofactor.

It catalyses the reaction oxaloacetate + phosphate = phosphoenolpyruvate + hydrogencarbonate. Functionally, forms oxaloacetate, a four-carbon dicarboxylic acid source for the tricarboxylic acid cycle. The protein is Phosphoenolpyruvate carboxylase of Shewanella loihica (strain ATCC BAA-1088 / PV-4).